We begin with the raw amino-acid sequence, 394 residues long: Gastricsin (394 aa).

The first 16 residues, 1–16 (MKWMVVVLLCLPLLEA), serve as a signal peptide directing secretion. The propeptide at 17 to 65 (TQIKVPLKKIKSIREVLREKGLLGDFLKNHKPQHARKFFRNRLAKTGDF) is activation peptide. The Peptidase A1 domain maps to 79-391 (YFGQISLGTP…DLANNRVGFA (313 aa)). The active site involves D97. 2 disulfides stabilise this stretch: C110/C115 and C273/C277. T283 is an active-site residue. An intrachain disulfide couples C316 to C349.

The protein belongs to the peptidase A1 family.

It is found in the secreted. It catalyses the reaction More restricted specificity than pepsin A, but shows preferential cleavage at Tyr-|-Xaa bonds. High activity on hemoglobin.. Its function is as follows. Hydrolyzes a variety of proteins. The sequence is that of Gastricsin (PGC) from Cavia porcellus (Guinea pig).